Reading from the N-terminus, the 876-residue chain is Alanine--tRNA ligase (876 aa).

Residues His565, His569, Cys667, and His671 each coordinate Zn(2+).

Belongs to the class-II aminoacyl-tRNA synthetase family. Zn(2+) is required as a cofactor.

The protein resides in the cytoplasm. The enzyme catalyses tRNA(Ala) + L-alanine + ATP = L-alanyl-tRNA(Ala) + AMP + diphosphate. In terms of biological role, catalyzes the attachment of alanine to tRNA(Ala) in a two-step reaction: alanine is first activated by ATP to form Ala-AMP and then transferred to the acceptor end of tRNA(Ala). Also edits incorrectly charged Ser-tRNA(Ala) and Gly-tRNA(Ala) via its editing domain. The polypeptide is Alanine--tRNA ligase (Staphylococcus saprophyticus subsp. saprophyticus (strain ATCC 15305 / DSM 20229 / NCIMB 8711 / NCTC 7292 / S-41)).